Here is a 152-residue protein sequence, read N- to C-terminus: MYRGCLAIPYMRWSPWRNWSVAAIRYRRLDDGKPKYMTMPGDKPRLYNTVALTRYSRDMAITEGEIDAITAELCGIPTVGVPGAQMWKPHFRELFLGYRNVNILADGDEPGMEFAKSVAKTLPNARIIPMPEGEDVNSLVTSQGKDALLERI.

One can recognise a Toprim domain in the interval 57-137; that stretch reads RDMAITEGEI…IPMPEGEDVN (81 aa).

This Mycobacterium (Mycobacteriophage D29) protein is Gene 57 protein (57).